Consider the following 358-residue polypeptide: Aminomethyltransferase (358 aa).

The protein belongs to the GcvT family. In terms of assembly, the glycine cleavage system is composed of four proteins: P, T, L and H.

The catalysed reaction is N(6)-[(R)-S(8)-aminomethyldihydrolipoyl]-L-lysyl-[protein] + (6S)-5,6,7,8-tetrahydrofolate = N(6)-[(R)-dihydrolipoyl]-L-lysyl-[protein] + (6R)-5,10-methylene-5,6,7,8-tetrahydrofolate + NH4(+). Functionally, the glycine cleavage system catalyzes the degradation of glycine. The chain is Aminomethyltransferase from Francisella tularensis subsp. holarctica (strain FTNF002-00 / FTA).